The sequence spans 245 residues: MAGLELLSDQGYRIDGRRAGELRKIQARMGVFAQADGSAYIEQGNTKALAVVYGPHEIRGSRSRALPDRALVNCQYSSATFSTGERKRRPHGDRKSCEMGLQLRQTFEAAILTQLHPRSQIDIYVQVLQADGGTYAACVNAATLAVMDAGIPMRDFVCACSAGFVDGTALADLSHVEEAAGGPQLALALLPASGQIALLEMDSRLHEDHLEQVLEAAAQAARGVHTLLDLVVRQHVQEASVSLGD.

N-acetylalanine is present on Ala2.

This sequence belongs to the RNase PH family. As to quaternary structure, component of the RNA exosome core complex (Exo-9), composed of EXOSC1, EXOSC2, EXOSC3, EXOSC4, EXOSC5, EXOSC6, EXOSC7, EXOSC8 and EXOSC9; within the complex interacts with EXOSC2, EXOSC7 and EXOSC9. The catalytically inactive RNA exosome core complex (Exo-9) associates with the catalytic subunit EXOSC10/RRP6. Exo-9 may associate with DIS3 to form the nucleolar exosome complex, or DIS3L to form the cytoplasmic exosome complex. Exo-9 is formed by a hexameric base ring consisting of the heterodimers EXOSC4-EXOSC9, EXOSC5-EXOSC8 and EXOSC6-EXOSC7, and a cap ring consisting of EXOSC1, EXOSC2 and EXOSC3. The RNA exosome complex associates with cofactors C1D/RRP47, MPHOSPH6/MPP6 and MTREX/MTR4. Interacts with DDX60. Interacts with DIS3; the interaction is direct.

It localises to the cytoplasm. The protein localises to the nucleus. Its subcellular location is the nucleolus. It is found in the nucleoplasm. Functionally, non-catalytic component of the RNA exosome complex which has 3'-&gt;5' exoribonuclease activity and participates in a multitude of cellular RNA processing and degradation events. In the nucleus, the RNA exosome complex is involved in proper maturation of stable RNA species such as rRNA, snRNA and snoRNA, in the elimination of RNA processing by-products and non-coding 'pervasive' transcripts, such as antisense RNA species and promoter-upstream transcripts (PROMPTs), and of mRNAs with processing defects, thereby limiting or excluding their export to the cytoplasm. The RNA exosome may be involved in Ig class switch recombination (CSR) and/or Ig variable region somatic hypermutation (SHM) by targeting AICDA deamination activity to transcribed dsDNA substrates. In the cytoplasm, the RNA exosome complex is involved in general mRNA turnover and specifically degrades inherently unstable mRNAs containing AU-rich elements (AREs) within their 3' untranslated regions, and in RNA surveillance pathways, preventing translation of aberrant mRNAs. It seems to be involved in degradation of histone mRNA. The catalytic inactive RNA exosome core complex of 9 subunits (Exo-9) is proposed to play a pivotal role in the binding and presentation of RNA for ribonucleolysis, and to serve as a scaffold for the association with catalytic subunits and accessory proteins or complexes. EXOSC4 binds to ARE-containing RNAs. The chain is Exosome complex component RRP41 (Exosc4) from Mus musculus (Mouse).